Consider the following 91-residue polypeptide: Small ribosomal subunit protein uS19 (91 aa).

The protein belongs to the universal ribosomal protein uS19 family.

In terms of biological role, protein S19 forms a complex with S13 that binds strongly to the 16S ribosomal RNA. This chain is Small ribosomal subunit protein uS19, found in Synechococcus sp. (strain RCC307).